A 302-amino-acid polypeptide reads, in one-letter code: Oxygen-dependent coproporphyrinogen-III oxidase (302 aa).

Substrate is bound at residue S94. A divalent metal cation-binding residues include H98 and H108. The Proton donor role is filled by H108. 110 to 112 serves as a coordination point for substrate; sequence NVR. A divalent metal cation is bound by residues H147 and H177. Positions 242–277 are important for dimerization; it reads YVEFNLVYDRGTLFGLQTGGRTESILMSMPPLVRWQ. Residue 260 to 262 participates in substrate binding; it reads GGR.

Belongs to the aerobic coproporphyrinogen-III oxidase family. As to quaternary structure, homodimer. It depends on a divalent metal cation as a cofactor.

The protein resides in the cytoplasm. The catalysed reaction is coproporphyrinogen III + O2 + 2 H(+) = protoporphyrinogen IX + 2 CO2 + 2 H2O. The protein operates within porphyrin-containing compound metabolism; protoporphyrin-IX biosynthesis; protoporphyrinogen-IX from coproporphyrinogen-III (O2 route): step 1/1. In terms of biological role, involved in the heme biosynthesis. Catalyzes the aerobic oxidative decarboxylation of propionate groups of rings A and B of coproporphyrinogen-III to yield the vinyl groups in protoporphyrinogen-IX. This chain is Oxygen-dependent coproporphyrinogen-III oxidase, found in Shewanella sp. (strain ANA-3).